Consider the following 138-residue polypeptide: Ergosterol biosynthetic protein 28 (138 aa).

A helical membrane pass occupies residues 17-33 (LPYWLLFISVVSIFNSV). Residue Asn-40 is glycosylated (N-linked (GlcNAc...) asparagine). 3 consecutive transmembrane segments (helical) span residues 56–75 (LSAR…RFYG), 87–107 (LTQF…LYFG), and 114–131 (GLSG…WMYL).

The protein belongs to the ERG28 family. Heterotetramer of ERG25, ERG26, ERG27 and ERG28. ERG28 acts as a scaffold to tether ERG27 and other 4,4-demethylation-related enzymes, forming a demethylation enzyme complex, in the endoplasmic reticulum. Interacts with ERG25, ERG26 and ERG27. Also interacts with ERG1, ERG3, ERG5, ERG6 and ERG11.

It localises to the endoplasmic reticulum membrane. In terms of biological role, part of the third module of ergosterol biosynthesis pathway that includes the late steps of the pathway. ERG28 has a role as a scaffold to help anchor the catalytic components of the C-4 demethylation complex ERG25, ERG26 and ERG27 to the endoplasmic reticulum. The third module or late pathway involves the ergosterol synthesis itself through consecutive reactions that mainly occur in the endoplasmic reticulum (ER) membrane. Firstly, the squalene synthase ERG9 catalyzes the condensation of 2 farnesyl pyrophosphate moieties to form squalene, which is the precursor of all steroids. Squalene synthase is crucial for balancing the incorporation of farnesyl diphosphate (FPP) into sterol and nonsterol isoprene synthesis. Secondly, the squalene epoxidase ERG1 catalyzes the stereospecific oxidation of squalene to (S)-2,3-epoxysqualene, which is considered to be a rate-limiting enzyme in steroid biosynthesis. Then, the lanosterol synthase ERG7 catalyzes the cyclization of (S)-2,3 oxidosqualene to lanosterol, a reaction that forms the sterol core. In the next steps, lanosterol is transformed to zymosterol through a complex process involving various demethylation, reduction and desaturation reactions. The lanosterol 14-alpha-demethylase ERG11 (also known as CYP51) catalyzes C14-demethylation of lanosterol to produce 4,4'-dimethyl cholesta-8,14,24-triene-3-beta-ol, which is critical for ergosterol biosynthesis. The C-14 reductase ERG24 reduces the C14=C15 double bond of 4,4-dimethyl-cholesta-8,14,24-trienol to produce 4,4-dimethyl-cholesta-8,24-dienol. 4,4-dimethyl-cholesta-8,24-dienol is substrate of the C-4 demethylation complex ERG25-ERG26-ERG27 in which ERG25 catalyzes the three-step monooxygenation required for the demethylation of 4,4-dimethyl and 4alpha-methylsterols, ERG26 catalyzes the oxidative decarboxylation that results in a reduction of the 3-beta-hydroxy group at the C-3 carbon to an oxo group, and ERG27 is responsible for the reduction of the keto group on the C-3. ERG28 has a role as a scaffold to help anchor ERG25, ERG26 and ERG27 to the endoplasmic reticulum and ERG29 regulates the activity of the iron-containing C4-methylsterol oxidase ERG25. Then, the sterol 24-C-methyltransferase ERG6 catalyzes the methyl transfer from S-adenosyl-methionine to the C-24 of zymosterol to form fecosterol. The C-8 sterol isomerase ERG2 catalyzes the reaction which results in unsaturation at C-7 in the B ring of sterols and thus converts fecosterol to episterol. The sterol-C5-desaturase ERG3 then catalyzes the introduction of a C-5 double bond in the B ring to produce 5-dehydroepisterol. The C-22 sterol desaturase ERG5 further converts 5-dehydroepisterol into ergosta-5,7,22,24(28)-tetraen-3beta-ol by forming the C-22(23) double bond in the sterol side chain. Finally, ergosta-5,7,22,24(28)-tetraen-3beta-ol is substrate of the C-24(28) sterol reductase ERG4 to produce ergosterol. The polypeptide is Ergosterol biosynthetic protein 28 (Candida albicans (strain SC5314 / ATCC MYA-2876) (Yeast)).